Consider the following 652-residue polypeptide: Regulator of DNA class I crossover intermediates 1 (652 aa).

The segment at residues 1–228 (MNWVGGSRSR…APYKRTNSSE (228 aa)) is a DNA-binding region (binds DNA containing a D-loop). Disordered regions lie at residues 464–512 (YLES…KATE) and 621–652 (EKES…SNSL). Low complexity predominate over residues 467–477 (SSQSSQSASYS). Composition is skewed to polar residues over residues 478–491 (PRPT…STDL) and 639–652 (DTTG…SNSL).

In terms of assembly, interacts with MSH5. Interacts with TEX11. As to expression, expressed mainly in testis (at protein level). Expressed in spermatogonia and enriched in spermatocytes; absent in testicular somatic cells (at protein level). No expression or low levels in other tissues.

The protein resides in the chromosome. In terms of biological role, involved in recombination, probably acting by stabilizing recombination intermediates during meiotic crossover formation. Required for normal germline development and fertility. Required for meiotic progression, complete chromosomal synapsis and crossover formation. Binds double-stranded DNA. However, also binds branched DNA molecules, such as those containing a D-loop or Holliday junction structure. Probably not required for formation of DNA double-strand breaks (DSBs). Also binds RNA in an RNA structure-independent manner, with a preference for binding 3'-UTR regions of mRNAs; may stabilize bound RNAs. The sequence is that of Regulator of DNA class I crossover intermediates 1 from Mus musculus (Mouse).